The chain runs to 319 residues: MAPFFSAMTSKKQSQGLPKGPHPDNAHRDGYDFSALVASHPPLKPFVRANAYGNLSIDFALPEAVKALNCALLKHHYGISRWDIPKGFLCPPIPGRVDYLHHLEDLLRQTPGTDGLPLLDIGTGANGIYALLAASRFGRAVVATDIAKASLTNVATILKANPGLEKRISLRFQSNPRHILTGVTQTNEQFAACVCNPPFHASAAEAALGTNRKLEGLAKSRGQRHISGPGKPQTLNFGGQDAELWCDGGERSFLLRLIDESARLPDLCVWFTTLVSKSDNLRPCKRRLEQRGASEIKVIEMQQGQKITRILAWRFESVT.

The disordered stretch occupies residues 1–25 (MAPFFSAMTSKKQSQGLPKGPHPDN). Polar residues predominate over residues 7–16 (AMTSKKQSQG).

This sequence belongs to the methyltransferase superfamily. METTL16/RlmF family.

It is found in the cytoplasm. The catalysed reaction is adenosine(1618) in 23S rRNA + S-adenosyl-L-methionine = N(6)-methyladenosine(1618) in 23S rRNA + S-adenosyl-L-homocysteine + H(+). In terms of biological role, specifically methylates the adenine in position 1618 of 23S rRNA. The sequence is that of Ribosomal RNA large subunit methyltransferase F from Shewanella amazonensis (strain ATCC BAA-1098 / SB2B).